Consider the following 418-residue polypeptide: CinA-like protein (418 aa).

Belongs to the CinA family.

This is CinA-like protein from Leptospira interrogans serogroup Icterohaemorrhagiae serovar Lai (strain 56601).